Reading from the N-terminus, the 67-residue chain is Small ribosomal subunit protein bS21 (67 aa).

Belongs to the bacterial ribosomal protein bS21 family.

This chain is Small ribosomal subunit protein bS21, found in Nitratidesulfovibrio vulgaris (strain DP4) (Desulfovibrio vulgaris).